We begin with the raw amino-acid sequence, 325 residues long: mRNA decay factor CTH1 (325 aa).

2 C3H1-type zinc fingers span residues 204 to 232 and 242 to 270; these read LYKT…HGLN and NYRT…HGDD. The segment at 284-306 is disordered; the sequence is SKDTALTPLPTSLAPSNNDNITN. Over residues 292-306 the composition is skewed to polar residues; sequence LPTSLAPSNNDNITN.

In terms of biological role, binds to specific AU-rich elements (ARE) in the 3'-untranslated region of target mRNAs and promotes their degradation. In response to iron deficiency, promotes the decay of many mRNAs encoding proteins involved in iron-dependent pathways. Negatively regulates primarily iron-dependent mitochondrial processes including respiration and amino acid biosynthesis. This Saccharomyces cerevisiae (strain ATCC 204508 / S288c) (Baker's yeast) protein is mRNA decay factor CTH1 (CTH1).